The sequence spans 184 residues: Photosystem I assembly protein Ycf4 (184 aa).

2 consecutive transmembrane segments (helical) span residues 19–39 (ISNF…LLVG) and 57–77 (IVFF…LFIS).

Belongs to the Ycf4 family.

The protein localises to the plastid. Its subcellular location is the chloroplast thylakoid membrane. Seems to be required for the assembly of the photosystem I complex. This Atropa belladonna (Belladonna) protein is Photosystem I assembly protein Ycf4.